Here is a 340-residue protein sequence, read N- to C-terminus: Putative transport protein AF_1800 (340 aa).

Helical transmembrane passes span 7–27 (LVLLLSILVVLALTFYFFTPL), 57–77 (SVIATAIVILPISVLMFYGLI), 140–160 (TLLILNFFISIVVCFYALADM), 193–213 (LWFGNFVVAILIGLVSLPFFL), 225–245 (GLMFLAALIPIFAEWMIILPV), 260–280 (FLLIGVVFLYVLPELILRPYF), and 290–310 (LVLMLAFIGGGLVGGISGFFI).

The protein belongs to the autoinducer-2 exporter (AI-2E) (TC 2.A.86) family.

The protein resides in the cell membrane. This is Putative transport protein AF_1800 from Archaeoglobus fulgidus (strain ATCC 49558 / DSM 4304 / JCM 9628 / NBRC 100126 / VC-16).